The following is a 248-amino-acid chain: Endonuclease V (248 aa).

Mg(2+)-binding residues include Asp-54 and Asp-118.

The protein belongs to the endonuclease V family. It depends on Mg(2+) as a cofactor.

The protein localises to the cytoplasm. The catalysed reaction is Endonucleolytic cleavage at apurinic or apyrimidinic sites to products with a 5'-phosphate.. Functionally, DNA repair enzyme involved in the repair of deaminated bases. Selectively cleaves double-stranded DNA at the second phosphodiester bond 3' to a deoxyinosine leaving behind the intact lesion on the nicked DNA. The sequence is that of Endonuclease V from Natronomonas pharaonis (strain ATCC 35678 / DSM 2160 / CIP 103997 / JCM 8858 / NBRC 14720 / NCIMB 2260 / Gabara) (Halobacterium pharaonis).